The sequence spans 541 residues: MITSQDRVIIFDTTLRDGEQSPGATLNIDEKLTIARQLSLLGVDVIEAGFPYASIGDFEAVQKIAEIVGVEGGPTICGLARTTRADIEAAGKALKPAAKARIHTFIATSDIHLAYKLKKTRAEVLEIASEMVAYAKTFVDDVEFSPEDAGRSDPEFLYQVLEKAIAAGATTVNIPDTVGYTTPAEFGGLIRGIKENVPNIDQAIISVHGHNDLGLAVANFLEAVKNGARQLECTINGIGERAGNAALEELVMAFHVRRQYFNPFFGRPPESETPLTNINTRHIYKTSRLVSSLTGMFVQPNKAIVGANAFAHESGIHQDGVLKNKLTYEIMDAQSIGLTDNQIVLGKLSGRHAFQSRLQELGFKLSDEEINKAFIKFKDLADKKKEITDWDLESIVNAEIQQPPELFRLELVQVSCGDRSRPTATVIIRTPNGEELTDAAIGTGPVDAVYKAINRVVNVENDLVEFSVQSVTAGIDAIGEVTIRVRHEGRVYSGHAANTDIIVASAEAYLSALNRLYAVLQRGVEKINLPKDQPTEVVAGS.

The Pyruvate carboxyltransferase domain maps to 8–284 (VIIFDTTLRD…LTNINTRHIY (277 aa)). Residues aspartate 17, histidine 208, histidine 210, and asparagine 244 each coordinate Mn(2+). Positions 408–541 (RLELVQVSCG…DQPTEVVAGS (134 aa)) are regulatory domain.

The protein belongs to the alpha-IPM synthase/homocitrate synthase family. LeuA type 1 subfamily. Homodimer. Requires Mn(2+) as cofactor.

Its subcellular location is the cytoplasm. The catalysed reaction is 3-methyl-2-oxobutanoate + acetyl-CoA + H2O = (2S)-2-isopropylmalate + CoA + H(+). It participates in amino-acid biosynthesis; L-leucine biosynthesis; L-leucine from 3-methyl-2-oxobutanoate: step 1/4. In terms of biological role, catalyzes the condensation of the acetyl group of acetyl-CoA with 3-methyl-2-oxobutanoate (2-ketoisovalerate) to form 3-carboxy-3-hydroxy-4-methylpentanoate (2-isopropylmalate). The protein is 2-isopropylmalate synthase of Trichodesmium erythraeum (strain IMS101).